Here is a 348-residue protein sequence, read N- to C-terminus: Phage-like element PBSX protein XkdT (348 aa).

Belongs to the Mu gp47/PBSX XkdT family.

This Bacillus subtilis (strain 168) protein is Phage-like element PBSX protein XkdT (xkdT).